The sequence spans 1124 residues: Translation initiation factor IF-2 (1124 aa).

Residues 32 to 41 (IAAKSHSSSI) are compositionally biased toward low complexity. Disordered regions lie at residues 32–451 (IAAK…QKVH) and 480–523 (LARP…RAAR). The segment covering 94 to 104 (ATSSSEISQVK) has biased composition (polar residues). Residues 134-173 (VNPTTTPTSSPPKTAARPVNAPISRPATPSRPSAPTPRSA) show a composition bias toward low complexity. The span at 192 to 203 (GQTSTSSKATTV) shows a compositional bias: polar residues. The span at 214-227 (SRPQSPAAPGRSAP) shows a compositional bias: low complexity. Composition is skewed to basic and acidic residues over residues 235–246 (SDRKAPKPELVG) and 261–272 (PEPEGQRPDKKR). Composition is skewed to low complexity over residues 274–283 (GISPRPIGGP) and 411–422 (RPAQAPAAGAPR). Residues 425–439 (GRPDWDDSAKLEALR) show a composition bias toward basic and acidic residues. 2 stretches are compositionally biased toward basic residues: residues 484 to 493 (AKPKSQKKPA) and 500 to 514 (LRKR…RQRR). In terms of domain architecture, tr-type G spans 615–787 (RRPPVVTVMG…ILLVTEVEDL (173 aa)). Residues 624–631 (GHVDHGKT) are G1. Residue 624–631 (GHVDHGKT) participates in GTP binding. A G2 region spans residues 649–653 (GITQH). The interval 674 to 677 (DTPG) is G3. GTP contacts are provided by residues 674-678 (DTPGH) and 728-731 (NKTD). Residues 728–731 (NKTD) form a G4 region. The interval 764-766 (SAI) is G5.

Belongs to the TRAFAC class translation factor GTPase superfamily. Classic translation factor GTPase family. IF-2 subfamily.

It is found in the cytoplasm. Its function is as follows. One of the essential components for the initiation of protein synthesis. Protects formylmethionyl-tRNA from spontaneous hydrolysis and promotes its binding to the 30S ribosomal subunits. Also involved in the hydrolysis of GTP during the formation of the 70S ribosomal complex. The chain is Translation initiation factor IF-2 from Prochlorococcus marinus (strain MIT 9303).